The sequence spans 172 residues: Major exported protein (172 aa).

It belongs to the hcp1 family.

The protein localises to the secreted. This Pseudomonas aeruginosa (strain ATCC 15692 / DSM 22644 / CIP 104116 / JCM 14847 / LMG 12228 / 1C / PRS 101 / PAO1) protein is Major exported protein (hcpA).